The sequence spans 445 residues: GTPase Der (445 aa).

EngA-type G domains lie at 3–167 (PVIA…YAGQ) and 180–353 (IKIA…AAAM). Residues 9–16 (GRPNVGKS), 56–60 (DTGGF), 119–122 (NKAE), 186–193 (GRPNVGKS), 233–237 (DTAGL), and 298–301 (NKWD) contribute to the GTP site. A KH-like domain is found at 354-438 (AKLPTPKLTR…PLRIEFRSSN (85 aa)).

This sequence belongs to the TRAFAC class TrmE-Era-EngA-EngB-Septin-like GTPase superfamily. EngA (Der) GTPase family. Associates with the 50S ribosomal subunit.

Its function is as follows. GTPase that plays an essential role in the late steps of ribosome biogenesis. The polypeptide is GTPase Der (Burkholderia vietnamiensis (strain G4 / LMG 22486) (Burkholderia cepacia (strain R1808))).